Reading from the N-terminus, the 841-residue chain is Translation initiation factor IF-2 (841 aa).

A disordered region spans residues 87–254; it reads RKKKVFVQRS…KRNAHGFQSP (168 aa). Over residues 96–135 the composition is skewed to basic and acidic residues; the sequence is SPEEIEAERKREMDERRAVENAARQKAEEEAKRRAEEDAR. Low complexity predominate over residues 136 to 175; sequence SQPAASQSAPAAAEPVAAAEPVREAAPAAAPAPASAAPSA. Basic and acidic residues-rich tracts occupy residues 176-217 and 225-234; these read DARK…EKAP and TTDEESDSFR. Positions 235-248 are enriched in basic residues; sequence RGGRGKGKLKKRNA. The tr-type G domain maps to 341–510; it reads SRAPVVTVMG…LLQAEVLELK (170 aa). The G1 stretch occupies residues 350–357; the sequence is GHVDHGKT. 350-357 lines the GTP pocket; it reads GHVDHGKT. The interval 375–379 is G2; the sequence is GITQH. Residues 396 to 399 are G3; it reads DTPG. Residues 396 to 400 and 450 to 453 contribute to the GTP site; these read DTPGH and NKID. Residues 450-453 form a G4 region; sequence NKID. Residues 486 to 488 are G5; sequence SAK.

Belongs to the TRAFAC class translation factor GTPase superfamily. Classic translation factor GTPase family. IF-2 subfamily.

It localises to the cytoplasm. In terms of biological role, one of the essential components for the initiation of protein synthesis. Protects formylmethionyl-tRNA from spontaneous hydrolysis and promotes its binding to the 30S ribosomal subunits. Also involved in the hydrolysis of GTP during the formation of the 70S ribosomal complex. The sequence is that of Translation initiation factor IF-2 from Pseudomonas syringae pv. syringae (strain B728a).